The sequence spans 970 residues: MVNSSRVQPQQPGDARRSPAPRAPGPGRLMAGGAIAGAGLAAPGGLREQRGLEIEMERIRQAAARDPPAGASASPSPPLSSCSRQAWSRDNPGFEAEEEEEEEEVEGEEGGMVVEMDVEWRPGSRRSASSSAVSSAGARGRGLGGYHGAGHPSGRRRQREDQGPPSPSPAGGGDPLHRHLPLDGQHPRVAWAERLVRGLRGLWGTRLMEESSTDREKYLKSVLRELATYLLFLIVLCILTYGMMSSSVYYYTRIMSQLFLDTPVSKMEKTNFKTLSSMEDFWKFTEGALLDGLYWKTQPSNRTEADNRSFIYYENLLLGVPRIRQLRVRNGSCSIPLDLRDEIKECYDVYSVSSEDRAPFGPRNGTAWIYTSEKDLNGSSHWGMIATYSGAGYYLDLSRTREETAAQVANLKKNVWLDRGTRAIFIDFTVYNANINLFCVIRLLIEFPATGGVIPSWQFQPVKLIRYVTTFDFFLAACEIIFCLFILYYVVEEILEIRIHKLHYFRSFWNCLDVVIIVLSVVAIGINIYRTSNVEALLQFLEDQNTFPNFENLAYWQTQFNNIAAVIVFFVWIKLFKFINFNRTMSQLSTTMSRCAKDLFGFAIMFFIIFLAYAQLAYLVFGTQVDDFSTFQECIFTQFRIILGDINFAEIEEANRVLGPIYFTTFVFFMFFILLNMFLAIINDTYSEVKSDLAQQKAEMELSDLIRKGYHKALIKLKLKKNTVDDISESLRQGGGKLNFDELRQDLKGKGHTDAEIEAIFTKYDQDGDQELTEHEHQQMRDDLEKEREDLDLDHSSLPRPMSSRSFPRSLDDSEEEDDDDSGHSSRRRGSISSGVSYEEFQVLVRRVDRMEHSIGSIVSKIDAVIVKLEIMERAKLKRREVLGRLLDGVAEDERLGRDNEIHREQMERLVREELERWESDDAASQISHGLGTPLGLNGQPRPRSSRPSSSQSTEGMEGGGGNGSANIHV.

Over residues 1 to 11 (MVNSSRVQPQQ) the composition is skewed to polar residues. Residues 1–182 (MVNSSRVQPQ…GDPLHRHLPL (182 aa)) are disordered. The Cytoplasmic segment spans residues 1–221 (MVNSSRVQPQ…STDREKYLKS (221 aa)). The segment covering 25 to 45 (GPGRLMAGGAIAGAGLAAPGG) has biased composition (low complexity). Basic and acidic residues predominate over residues 47–60 (REQRGLEIEMERIR). A compositionally biased stretch (low complexity) spans 62–83 (AAARDPPAGASASPSPPLSSCS). Residues S76 and S80 each carry the phosphoserine modification. Over residues 95–109 (EAEEEEEEEEVEGEE) the composition is skewed to acidic residues. A compositionally biased stretch (low complexity) spans 125-138 (RRSASSSAVSSAGA). Residue R139 is modified to Omega-N-methylarginine. The segment covering 139–148 (RGRGLGGYHG) has biased composition (gly residues). Residues 222 to 243 (VLRELATYLLFLIVLCILTYGM) form a helical membrane-spanning segment. Topologically, residues 244 to 470 (MSSSVYYYTR…PVKLIRYVTT (227 aa)) are extracellular. N-linked (GlcNAc...) asparagine glycosylation is found at N301, N307, and N330. C333 and C346 are disulfide-bonded. 2 N-linked (GlcNAc...) asparagine glycosylation sites follow: N364 and N377. The chain crosses the membrane as a helical span at residues 471 to 491 (FDFFLAACEIIFCLFILYYVV). Residues 492–507 (EEILEIRIHKLHYFRS) lie on the Cytoplasmic side of the membrane. The helical transmembrane segment at 508–528 (FWNCLDVVIIVLSVVAIGINI) threads the bilayer. At 529–554 (YRTSNVEALLQFLEDQNTFPNFENLA) the chain is on the extracellular side. A helical transmembrane segment spans residues 555–575 (YWQTQFNNIAAVIVFFVWIKL). Q559 serves as a coordination point for cholesterol. Residues 576–599 (FKFINFNRTMSQLSTTMSRCAKDL) lie on the Cytoplasmic side of the membrane. Residues 600–621 (FGFAIMFFIIFLAYAQLAYLVF) traverse the membrane as a helical segment. The Extracellular segment spans residues 622–633 (GTQVDDFSTFQE). Positions 634 to 648 (CIFTQFRIILGDINF) form an intramembrane region, pore-forming. Ca(2+) is bound at residue L643. The Selectivity filter motif lies at 643–645 (LGD). Residues 649-656 (AEIEEANR) lie on the Extracellular side of the membrane. Residues 657–677 (VLGPIYFTTFVFFMFFILLNM) form a helical membrane-spanning segment. Residues 678-970 (FLAIINDTYS…GGNGSANIHV (293 aa)) are Cytoplasmic-facing. The EF-hand domain maps to 750-785 (KGHTDAEIEAIFTKYDQDGDQELTEHEHQQMRDDLE). D765, D767, D769, E771, and E776 together coordinate Ca(2+). The tract at residues 766–833 (QDGDQELTEH…HSSRRRGSIS (68 aa)) is disordered. Basic and acidic residues predominate over residues 772 to 797 (LTEHEHQQMRDDLEKEREDLDLDHSS). Low complexity predominate over residues 798-809 (LPRPMSSRSFPR). Phosphoserine is present on residues S803, S810, S814, and S831. Residues 805–824 (RSFPRSLDDSEEEDDDDSGH) are linker. The interval 812 to 823 (DDSEEEDDDDSG) is important for interaction with PACS1 and PACS2. Residues 835 to 874 (GVSYEEFQVLVRRVDRMEHSIGSIVSKIDAVIVKLEIMER) are a coiled coil. A disordered region spans residues 921–970 (DDAASQISHGLGTPLGLNGQPRPRSSRPSSSQSTEGMEGGGGNGSANIHV). Positions 940-956 (QPRPRSSRPSSSQSTEG) are enriched in low complexity.

Belongs to the polycystin family. Homotetramer. Component of the heterotetrameric polycystin channel complex with PKD1; the tetramer contains one PKD1 chain and three PKD2 chains. Isoform 1 interacts with PKD1 while isoform 3 does not. Interacts with PKD1L1; probably forms a Ca(2+) channel. Interacts with CD2AP. Interacts with HAX1. Interacts with NEK8. Part of a complex containing AKAP5, ADCY5, ADCY6 and PDE4C. Interacts (via C-terminus) with TRPV4 (via C-terminus). Interacts (via C-terminal acidic region) with PACS1 and PACS2; these interactions retain the protein in the endoplasmic reticulum and prevent trafficking to the cell membrane. Interacts with TMEM33. Form a heterotetramer with TRPC1 with a 2:2 stoichiometry; has distinct channel properties separate from PKD2 or TRPC1 homomers alone. Interacts with TMEM120A; TMEM120A inhibits PKD2 channel activity through the physical association of PKD2 with TMEM120A. Interacts (via N-terminus) with RYR2; regulates RYR2 channel activity. Post-translationally, N-glycosylated. The four subunits in a tetramer probably differ in the extent of glycosylation; simultaneous glycosylation of all experimentally validated sites would probably create steric hindrance. In terms of processing, phosphorylated. Phosphorylation is important for protein function; a mutant that lacks the N-terminal phosphorylation sites cannot complement a zebrafish pkd2-deficient mutant. PKD-mediated phosphorylation at the C-terminus regulates its function in the release of Ca(2+) stores from the endoplasmic reticulum. Phosphorylation at Ser-814 regulates PKD2 trafficking. Phosphorylation at Ser-76 is required for PKD2 trafficking to or retention at the lateral plasma membrane. Phosphorylation at Ser-803, Ser-814 and Ser-831 regulates PKD2 channel activity. Sumoylated by SUMO1; sumoylation regulates PKD2 membrane recycling and is necessary for intravascular pressure-induced arterial contractility. Expressed in mesenchymally derived structures in the developing embryo at day 12.5. In adult, mostly expressed in kidney.

It is found in the cell projection. It localises to the cilium membrane. Its subcellular location is the endoplasmic reticulum membrane. The protein resides in the cell membrane. The protein localises to the basolateral cell membrane. It is found in the cytoplasmic vesicle membrane. It localises to the golgi apparatus. Its subcellular location is the vesicle. The protein resides in the secreted. The protein localises to the extracellular exosome. It carries out the reaction K(+)(in) = K(+)(out). The catalysed reaction is Na(+)(in) = Na(+)(out). It catalyses the reaction Ca(2+)(in) = Ca(2+)(out). Channel activity is regulated by phosphorylation. Channel activity is regulated by intracellular Ca(2+). At the endoplasmic reticulum membrane (ER), TMEM33 enhances its channel activity. TMEM120A inhibits the channel activity of PKD2, and mediates mechanosensitivity of the PKD2-TMEM120A channel complex. PKD1/PKD2 complex on the plasma membrane is activated by PKD1 N-terminus. Functionally, forms a nonselective cation channel. Can function as a homotetrameric ion channel or can form heteromer with PKD1. Displays distinct function depending on its subcellular localization and regulation by its binding partners. Functions as a cation channel, with a preference for monovalent cations over divalent cations that allows K(+), Na(+) and Ca(2+) influx, with low selectivity for Ca(2+). Involved in fluid-flow mechanosensation in the primary cilium in renal epithelium. In the endoplasmic reticulum, likely functions as a K(+) channel to facilitate Ca(2+) release. The heterotetrameric PKD1/PKD2 channel has higher Ca(2+) permeability than homomeric PKD2 channel and acts as a primarily Ca(2+)-permeable channel. Interacts with and acts as a regulator of a number of other channels, such as TRPV4, TRPC1, IP3R, RYR2, ultimately further affecting intracellular signaling, to modulate intracellular Ca(2+) signaling. Together with TRPV4, forms mechano- and thermosensitive channels in cilium. In cardiomyocytes, PKD2 modulates Ca(2+) release from stimulated RYR2 receptors through direct association. Also involved in left-right axis specification via its role in sensing nodal flow; forms a complex with PKD1L1 in cilia to facilitate flow detection in left-right patterning. Acts as a regulator of cilium length together with PKD1. Mediates systemic blood pressure and contributes to the myogenic response in cerebral arteries though vasoconstriction. This chain is Polycystin-2, found in Bos taurus (Bovine).